A 369-amino-acid chain; its full sequence is sn-glycerol-3-phosphate import ATP-binding protein UgpC 1 (369 aa).

Positions 4–234 constitute an ABC transporter domain; the sequence is ISIRGVKKNY…PVSRFVAGFV (231 aa). 36–43 provides a ligand contact to ATP; it reads GPSGCGKS.

It belongs to the ABC transporter superfamily. sn-glycerol-3-phosphate importer (TC 3.A.1.1.3) family. As to quaternary structure, the complex is composed of two ATP-binding proteins (UgpC), two transmembrane proteins (UgpA and UgpE) and a solute-binding protein (UgpB).

The protein resides in the cell inner membrane. It carries out the reaction sn-glycerol 3-phosphate(out) + ATP + H2O = sn-glycerol 3-phosphate(in) + ADP + phosphate + H(+). Part of the ABC transporter complex UgpBAEC involved in sn-glycerol-3-phosphate (G3P) import. Responsible for energy coupling to the transport system. In Rhizobium johnstonii (strain DSM 114642 / LMG 32736 / 3841) (Rhizobium leguminosarum bv. viciae), this protein is sn-glycerol-3-phosphate import ATP-binding protein UgpC 1.